A 249-amino-acid chain; its full sequence is Small ribosomal subunit protein uS2 (249 aa).

The protein belongs to the universal ribosomal protein uS2 family.

This chain is Small ribosomal subunit protein uS2, found in Polynucleobacter necessarius subsp. necessarius (strain STIR1).